Here is a 150-residue protein sequence, read N- to C-terminus: Large ribosomal subunit protein bL9 (150 aa).

This sequence belongs to the bacterial ribosomal protein bL9 family.

Its function is as follows. Binds to the 23S rRNA. This is Large ribosomal subunit protein bL9 from Corynebacterium kroppenstedtii (strain DSM 44385 / JCM 11950 / CIP 105744 / CCUG 35717).